We begin with the raw amino-acid sequence, 138 residues long: Isochorismatase-like protein asqB (138 aa).

The protein belongs to the isochorismatase family.

It catalyses the reaction [(1'E)-5'-(3',3'-dimethyloxiran-2'-yl)-3'-hydroxy-3'-methylpent-1'-en-1'-yl]-quinolinone B = yaequinolone C. The protein operates within secondary metabolite biosynthesis. Its pathway is alkaloid biosynthesis. It participates in mycotoxin biosynthesis. Functionally, isochorismatase-like protein; part of the gene cluster that mediates the biosynthesis of the aspoquinolone mycotoxins. Within the pathway, asqB converts [(1'E)-5'-(3',3'-dimethyloxiran-2'-yl)-3'-hydroxy-3'-methylpent-1'-en-1'-yl]-quinolinone B into yaequinolone C. The first step of the pathway is catalyzed by the nonribosomal peptide synthetase asqK that condenses anthranilic acid and O-methyl-L-tyrosine to produce 4'-methoxycyclopeptin. 4'-methoxycyclopeptin is then converted to 4'-methoxydehydrocyclopeptin by the ketoglutarate-dependent dioxygenase asqJ. AsqJ also converts its first product 4'-methoxydehydrocyclopeptin to 4'-methoxycyclopenin. The following conversion of 4'-methoxycyclopenin into 4'-methoxyviridicatin is catalyzed by the cyclopenase asqI. 4'-methoxyviridicatin is the precursor of quinolone natural products, and is further converted to quinolinone B. The prenyltransferase asqH1 then catalyzes the canonical Friedel-Crafts alkylation of quinolinone B with dimethylallyl cation to yield dimethylallyl quinolone, which is subjected to FAD-dependent dehydrogenation by the FAD-linked oxidoreductase asqF to yield conjugated aryl diene. The delta(3') double bond then serves as the site of the second alkylation with DMAPP catalyzed by the prenyltransferase asqH2 to yield a carbenium ion intermediate, which can be attacked by H(2)O to yield a styrenyl quinolone containing a C3'-hydroxyprenyl chain. The FAD-dependent monooxygenase asqG performs epoxidation of the terminal C7'-C8' olefin. Finally, after dehydratation of the epoxide at C3 by asqC, the quinolone epoxide rearrangement protein asqO catalyzes an enzymatic 3-exo-tet cyclization to yield the cyclopropyl-THF ring system in aspoquinolone. This is Isochorismatase-like protein asqB from Emericella nidulans (strain FGSC A4 / ATCC 38163 / CBS 112.46 / NRRL 194 / M139) (Aspergillus nidulans).